We begin with the raw amino-acid sequence, 166 residues long: Probable histone deacetylase complex subunit SAP18 (166 aa).

The disordered stretch occupies residues 143 to 166 (GRRFNNREQGDRFDHRQRQRSPIR). Positions 147–158 (NNREQGDRFDHR) are enriched in basic and acidic residues.

This sequence belongs to the SAP18 family. Interacts with SIN3 and histone deacetylase.

Its function is as follows. Acts in transcription repression. Involved in the tethering of the SIN3 complex to core histone proteins. The chain is Probable histone deacetylase complex subunit SAP18 from Caenorhabditis elegans.